Reading from the N-terminus, the 215-residue chain is Kinetochore protein Spc25 (215 aa).

A coiled-coil region spans residues 43 to 114; that stretch reads DNLLTAMEKA…MECIHALKRA (72 aa).

It belongs to the SPC25 family. Component of the Ndc80 complex, which is composed of Ndc80, Nuf2 and Spc25.

Its subcellular location is the nucleus. It is found in the chromosome. The protein resides in the centromere. The protein localises to the kinetochore. Functionally, acts as a component of the essential kinetochore-associated Ndc80 complex, which is required for chromosome segregation and spindle checkpoint activity during meiosis and mitosis. Required for kinetochore integrity and the organization of stable microtubule binding sites in the outer plate of the kinetochore. Participates in SAC signaling that responds specifically to disruptions in spindle microtubule dynamics. The NDC80 complex synergistically enhances the affinity of the SKA1 complex for microtubules and may allow the NDC80 complex to track depolymerizing microtubules. The chain is Kinetochore protein Spc25 from Drosophila ananassae (Fruit fly).